The primary structure comprises 432 residues: MQKRALTINSRGLNGELAVPGDKSISHRALMIGALSEGTTVIDHFLVGEDCLSTLRALQDLGVEIERKGEHVEVIGRGIAGLVEPAAPLQMNNSGTSTRLLMGILAGQSFTSQLVGDASLSRRPMKRVQGPLARLGAQIGLSEAGTLPATVVGHPLQGARVKLEVASAQIKSAVILAALQAQGSTTVSEPLPTRDHTERLLKAFGANLTVDRAANSITVTPGARLVGQEVLVPGDPSSAAFFLVAGAVIANSHLTVKDVCLNPTRTGLIRVLKKMGARLSIKETASGGEPLGDVTIQTSQLRAVTVTAKDVPDLIDELPLVALLAACADGVSEISGAGELRVKETDRIQTVAELFLQLGVDVEERPDGWRIVGRPNWQVQKPNLNSHGDHRLGMLAAVAALRSTTPLFLIDPDAVAVSYPSFFADLAKLGGA.

3 residues coordinate 3-phosphoshikimate: K23, S24, and R28. A phosphoenolpyruvate-binding site is contributed by K23. Residues G95 and R123 each contribute to the phosphoenolpyruvate site. The 3-phosphoshikimate site is built by S167, Q169, D316, and K343. Q169 provides a ligand contact to phosphoenolpyruvate. D316 serves as the catalytic Proton acceptor. Phosphoenolpyruvate is bound by residues R347 and R391.

It belongs to the EPSP synthase family. As to quaternary structure, monomer.

It is found in the cytoplasm. The catalysed reaction is 3-phosphoshikimate + phosphoenolpyruvate = 5-O-(1-carboxyvinyl)-3-phosphoshikimate + phosphate. The protein operates within metabolic intermediate biosynthesis; chorismate biosynthesis; chorismate from D-erythrose 4-phosphate and phosphoenolpyruvate: step 6/7. Its function is as follows. Catalyzes the transfer of the enolpyruvyl moiety of phosphoenolpyruvate (PEP) to the 5-hydroxyl of shikimate-3-phosphate (S3P) to produce enolpyruvyl shikimate-3-phosphate and inorganic phosphate. The sequence is that of 3-phosphoshikimate 1-carboxyvinyltransferase from Limosilactobacillus fermentum (strain NBRC 3956 / LMG 18251) (Lactobacillus fermentum).